Consider the following 455-residue polypeptide: Putative PTS system EIIBC component YbbF (455 aa).

One can recognise a PTS EIIB type-1 domain in the interval 8–90 (HHLAQKILEL…SKLVSAEEGA (83 aa)). C30 (phosphocysteine intermediate; for EIIB activity) is an active-site residue. The PTS EIIC type-1 domain occupies 116-455 (RKIASIFIPL…YKDEMASQFD (340 aa)). 10 helical membrane passes run 118 to 138 (IASI…ITGI), 154 to 174 (IAII…ILVG), 181 to 201 (FGGT…PEIA), 210 to 230 (LLPG…IAYT), 250 to 270 (VSLL…GGFI), 281 to 301 (ILDI…LPLV), 325 to 345 (LLPI…AVFV), 355 to 375 (AIAG…IFGV), 399 to 419 (YFQV…FLVL), and 423 to 443 (IILY…LTYA).

The protein resides in the cell membrane. The phosphoenolpyruvate-dependent sugar phosphotransferase system (sugar PTS), a major carbohydrate active -transport system, catalyzes the phosphorylation of incoming sugar substrates concomitantly with their translocation across the cell membrane. This is Putative PTS system EIIBC component YbbF (ybbF) from Bacillus subtilis (strain 168).